A 725-amino-acid chain; its full sequence is MFSALKKLVGSEQAPGRDKNIPAGLQSMNQALQRRFAKGVQYNMKIVIRGDRNTGKTALWHRLQGKKFVEEYIPTQEIQVTSIHWNYKTTDDVVKVEVWDVVDKGKCKKRGDGLKTENDPQEAESELALDAEFLDVYKNCNGVVMMFDITKQWTFNYVLRELPKVPTHVPVCVLGNYRDMGEHRVILPDDVRDFIEHLDRPPGSSYFRYAESSMKNSFGLKYLHKFFNIPFLQLQRETLLRQLETNQLDIDATLEELSVQQETEDQNYSIFLEMMEARSRGHASPLAANGQSPSSGSQSPVVPPSAVSTGSSSPSTPQPAPQLSLGVSSTCPSAPSPVPSLEAMPSSVHSSAPAPTPAPAPAPAQRRSIISRLFGTSPAAEVTPSPPEPAPALEAPARVQNVEDFVPEDGLDRSFLEDTSVPKDKKVGAKGPQQDSDSDDGEALGGNPMVAGFQDDVDIEDQTHGKSLLPSDPMPSKNISLSSEEEAEGLAGHPRVAPQQCSEPETKWSSTKVSHPQKKRAPTRGTPPWSDGLTTDDSERPQEGKDKQVSSESDPEGPIAAQMLSFVMDDPDFESDESDTQRRMGRFPVREDLSDVTDEDTGPAQPPPPSKLPGAFRLKNDSDLFGLGLEEMGPKESSDEDRDSKLPSKEKKKKKKKSKEEEEKTTKKKSKHKKSKDKEEGKEDRKKKRKPPRSKEQKAADELEAFLGGGAPGSRHPGGGDYEEL.

N-acetylmethionine is present on Met1. A small GTPase-like region spans residues 39–279 (GVQYNMKIVI…IFLEMMEARS (241 aa)). GTP contacts are provided by residues 50 to 57 (GDRNTGKT), 100 to 104 (DVVDK), and 177 to 179 (YRD). Disordered regions lie at residues 281 to 364 (GHAS…PAPA) and 378 to 725 (PAAE…YEEL). 2 stretches are compositionally biased toward low complexity: residues 291–325 (QSPS…QLSL) and 343–353 (AMPSSVHSSAP). Basic and acidic residues predominate over residues 410-427 (GLDRSFLEDTSVPKDKKV). Ser414, Ser436, Ser438, Ser480, Ser482, Ser483, and Ser502 each carry phosphoserine. Over residues 499-514 (QQCSEPETKWSSTKVS) the composition is skewed to polar residues. Residues 537–549 (DSERPQEGKDKQV) show a composition bias toward basic and acidic residues. Over residues 569–578 (DDPDFESDES) the composition is skewed to acidic residues. 2 positions are modified to phosphoserine: Ser575 and Ser594. Thr597 carries the phosphothreonine modification. The segment covering 632–649 (MGPKESSDEDRDSKLPSK) has biased composition (basic and acidic residues). Ser637, Ser638, and Ser644 each carry phosphoserine. The tract at residues 652-690 (KKKKKKSKEEEEKTTKKKSKHKKSKDKEEGKEDRKKKRK) is interaction with CDKN2A. Residues 666–675 (TKKKSKHKKS) are compositionally biased toward basic residues. Residues 707–725 (LGGGAPGSRHPGGGDYEEL) show a composition bias toward gly residues.

This sequence belongs to the small GTPase superfamily. Rab family.

It localises to the nucleus. Its subcellular location is the cytoplasm. Its function is as follows. May enhance cellular proliferation. May reduce growth inhibitory activity of CDKN2A. The polypeptide is Rab-like protein 6 (Rabl6) (Mus musculus (Mouse)).